The chain runs to 89 residues: Helix-loop-helix protein 15 (89 aa).

A disordered region spans residues 1–32 (MLMEDGGLDTTSEEYRKLSKAERRKRRRATPK). Over residues 22 to 32 (ERRKRRRATPK) the composition is skewed to basic residues. The segment at 32-45 (KYRNLHATRERIRV) is basic motif. In terms of domain architecture, bHLH spans 32–84 (KYRNLHATRERIRVESFNMAFSQLRALLPTLPVEKKLSKIEILRFSIAYISFL). A helix-loop-helix motif region spans residues 46–84 (ESFNMAFSQLRALLPTLPVEKKLSKIEILRFSIAYISFL).

As to expression, expressed in sensory head neurons of the lateral ganglion.

The protein localises to the nucleus. Transcription factor which binds the E box motif 5'-CA[TC][AG]TG-3'. Involved in modulating physiological aging, probably by regulating expression of branched-chain amino acid transferase-1, bcat-1. The chain is Helix-loop-helix protein 15 from Caenorhabditis elegans.